We begin with the raw amino-acid sequence, 384 residues long: Secreted effector protein EspF(U) (384 aa).

6 consecutive repeat copies span residues 96 to 142, 143 to 189, 190 to 236, 237 to 283, 284 to 330, and 331 to 377. Residues 96-377 form a 6 X 48 AA approximate tandem repeats region; that stretch reads IXPARSMAEH…RLMQHLAEHG (282 aa). The interval 247-266 is disordered; it reads IPPAPNWPAPPPPVQNEQSR. Over residues 248–260 the composition is skewed to pro residues; the sequence is PPAPNWPAPPPPV.

It belongs to the EspF(U)/TccP family. In terms of assembly, interacts with host BAIAP2 and host WASL/N-WASP. Can also interact with host proteins BAIAP2L1 and WAS/WASP.

The protein localises to the secreted. The protein resides in the host cytoplasm. In terms of biological role, required for efficient pedestal formation in host epithelial cells during infection. Acts as an intermediate between Tir (via host BAIAP2) and host WASL/N-WASP. Directly binds and activates WASL/N-WASP, which stimulates actin polymerization and leads to the formation of actin pedestals at the sites of bacterial adhesion. In Escherichia coli O157:H7, this protein is Secreted effector protein EspF(U) (espF(U)).